A 232-amino-acid chain; its full sequence is Nucleoside diphosphate kinase 2, chloroplastic (232 aa).

The transit peptide at 1–79 (MGCLSVVGAS…TRIFLPHLVA (79 aa)) directs the protein to the chloroplast. ATP is bound by residues K92, F140, R168, T174, R185, and N195. The Pros-phosphohistidine intermediate role is filled by H198.

It belongs to the NDK family. Mg(2+) serves as cofactor.

The protein resides in the plastid. It localises to the chloroplast. It carries out the reaction a 2'-deoxyribonucleoside 5'-diphosphate + ATP = a 2'-deoxyribonucleoside 5'-triphosphate + ADP. The enzyme catalyses a ribonucleoside 5'-diphosphate + ATP = a ribonucleoside 5'-triphosphate + ADP. Its function is as follows. Major role in the synthesis of nucleoside triphosphates other than ATP. The ATP gamma phosphate is transferred to the NDP beta phosphate via a ping-pong mechanism, using a phosphorylated active-site intermediate. This chain is Nucleoside diphosphate kinase 2, chloroplastic, found in Nicotiana tabacum (Common tobacco).